The sequence spans 248 residues: Probable transcriptional regulatory protein Msil_2305 (248 aa).

This sequence belongs to the TACO1 family.

Its subcellular location is the cytoplasm. The chain is Probable transcriptional regulatory protein Msil_2305 from Methylocella silvestris (strain DSM 15510 / CIP 108128 / LMG 27833 / NCIMB 13906 / BL2).